The primary structure comprises 265 residues: uncharacterized protein (265 aa).

2 disordered regions span residues 62 to 94 (RNKKKEEKKGKGLMTARGGNRRDTETSQQALGK) and 118 to 149 (MVPGSYIKDGPKKSDTDIKDAVDPESTQRPNP). The segment covering 126 to 139 (DGPKKSDTDIKDAV) has biased composition (basic and acidic residues).

This is an uncharacterized protein from Homo sapiens (Human).